The primary structure comprises 272 residues: Urease accessory protein UreD (272 aa).

It belongs to the UreD family. In terms of assembly, ureD, UreF and UreG form a complex that acts as a GTP-hydrolysis-dependent molecular chaperone, activating the urease apoprotein by helping to assemble the nickel containing metallocenter of UreC. The UreE protein probably delivers the nickel.

The protein resides in the cytoplasm. Required for maturation of urease via the functional incorporation of the urease nickel metallocenter. This chain is Urease accessory protein UreD, found in Opitutus terrae (strain DSM 11246 / JCM 15787 / PB90-1).